Consider the following 375-residue polypeptide: Trichodiene synthase (375 aa).

Belongs to the trichodiene synthase family.

It catalyses the reaction (2E,6E)-farnesyl diphosphate = trichodiene + diphosphate. It participates in sesquiterpene biosynthesis; trichothecene biosynthesis. Functionally, TS is a member of the terpene cyclase group of enzymes. It catalyzes the isomerization and cyclization of farnesyl pyro-phosphate to form trichodiene, the first cyclic intermediate in the biosynthetic pathway for trichothecenes. It serves to branch trichothecene biosynthesis from the isoprenoid pathway. The polypeptide is Trichodiene synthase (TRI5) (Fusarium mesoamericanum).